Reading from the N-terminus, the 206-residue chain is Holliday junction branch migration complex subunit RuvA (206 aa).

A domain I region spans residues Met-1 to Ser-63. The tract at residues Thr-64–Thr-142 is domain II. The interval Ile-143–Gly-150 is flexible linker. Residues Asn-151 to Arg-206 are domain III.

The protein belongs to the RuvA family. Homotetramer. Forms an RuvA(8)-RuvB(12)-Holliday junction (HJ) complex. HJ DNA is sandwiched between 2 RuvA tetramers; dsDNA enters through RuvA and exits via RuvB. An RuvB hexamer assembles on each DNA strand where it exits the tetramer. Each RuvB hexamer is contacted by two RuvA subunits (via domain III) on 2 adjacent RuvB subunits; this complex drives branch migration. In the full resolvosome a probable DNA-RuvA(4)-RuvB(12)-RuvC(2) complex forms which resolves the HJ.

It localises to the cytoplasm. Its function is as follows. The RuvA-RuvB-RuvC complex processes Holliday junction (HJ) DNA during genetic recombination and DNA repair, while the RuvA-RuvB complex plays an important role in the rescue of blocked DNA replication forks via replication fork reversal (RFR). RuvA specifically binds to HJ cruciform DNA, conferring on it an open structure. The RuvB hexamer acts as an ATP-dependent pump, pulling dsDNA into and through the RuvAB complex. HJ branch migration allows RuvC to scan DNA until it finds its consensus sequence, where it cleaves and resolves the cruciform DNA. The polypeptide is Holliday junction branch migration complex subunit RuvA (Corynebacterium urealyticum (strain ATCC 43042 / DSM 7109)).